Consider the following 299-residue polypeptide: Delta-9 desaturase-like 3 protein (299 aa).

A run of 2 helical transmembrane segments spans residues 38–57 (AVGA…TWEA) and 58–76 (FRFA…TFSY). The Histidine box-1 motif lies at 77–82 (HRNLTH). The Histidine box-2 motif lies at 114 to 118 (HRFHH). Helical transmembrane passes span 174 to 194 (IGLH…LPYL) and 198 to 218 (VGVG…ACHI). The Histidine box-3 signature appears at 246 to 250 (HNNHH). The helical transmembrane segment at 262 to 282 (WYQVDLTWYLIWFFQVLGLAT) threads the bilayer.

The protein belongs to the fatty acid desaturase type 1 family. Fe cation is required as a cofactor.

Its subcellular location is the endoplasmic reticulum membrane. It functions in the pathway lipid metabolism; polyunsaturated fatty acid biosynthesis. The chain is Delta-9 desaturase-like 3 protein from Arabidopsis thaliana (Mouse-ear cress).